The chain runs to 439 residues: GTPase Der (439 aa).

EngA-type G domains are found at residues A4–E169 and I177–N352. GTP-binding positions include G10–S17, D57–L61, N120–D123, G183–S190, D230–I234, and N295–D298. The KH-like domain occupies K353–G437.

It belongs to the TRAFAC class TrmE-Era-EngA-EngB-Septin-like GTPase superfamily. EngA (Der) GTPase family. Associates with the 50S ribosomal subunit.

In terms of biological role, GTPase that plays an essential role in the late steps of ribosome biogenesis. The protein is GTPase Der of Thermoanaerobacter pseudethanolicus (strain ATCC 33223 / 39E) (Clostridium thermohydrosulfuricum).